The following is a 205-amino-acid chain: Outer-membrane lipoprotein LolB (205 aa).

Positions 1-17 (MFLRHCITFTLIALLAG) are cleaved as a signal peptide. Residue cysteine 18 is the site of N-palmitoyl cysteine attachment. Cysteine 18 carries S-diacylglycerol cysteine lipidation.

Belongs to the LolB family. As to quaternary structure, monomer.

It localises to the cell outer membrane. Plays a critical role in the incorporation of lipoproteins in the outer membrane after they are released by the LolA protein. This is Outer-membrane lipoprotein LolB from Pseudomonas putida (strain ATCC 47054 / DSM 6125 / CFBP 8728 / NCIMB 11950 / KT2440).